A 205-amino-acid chain; its full sequence is Histidine biosynthesis bifunctional protein HisIE (205 aa).

The phosphoribosyl-AMP cyclohydrolase stretch occupies residues 1–115; it reads MIDIKELKFD…DEETEDGIEI (115 aa). The phosphoribosyl-ATP pyrophosphohydrolase stretch occupies residues 116 to 205; it reads LNKLYERIKG…YNELERRYKK (90 aa).

The protein in the N-terminal section; belongs to the PRA-CH family. This sequence in the C-terminal section; belongs to the PRA-PH family.

It localises to the cytoplasm. It carries out the reaction 1-(5-phospho-beta-D-ribosyl)-ATP + H2O = 1-(5-phospho-beta-D-ribosyl)-5'-AMP + diphosphate + H(+). The catalysed reaction is 1-(5-phospho-beta-D-ribosyl)-5'-AMP + H2O = 1-(5-phospho-beta-D-ribosyl)-5-[(5-phospho-beta-D-ribosylamino)methylideneamino]imidazole-4-carboxamide. Its pathway is amino-acid biosynthesis; L-histidine biosynthesis; L-histidine from 5-phospho-alpha-D-ribose 1-diphosphate: step 2/9. It participates in amino-acid biosynthesis; L-histidine biosynthesis; L-histidine from 5-phospho-alpha-D-ribose 1-diphosphate: step 3/9. The sequence is that of Histidine biosynthesis bifunctional protein HisIE from Caldanaerobacter subterraneus subsp. tengcongensis (strain DSM 15242 / JCM 11007 / NBRC 100824 / MB4) (Thermoanaerobacter tengcongensis).